The chain runs to 128 residues: uncharacterized protein (128 aa).

Positions 1-28 (MDADDFGKKDLENGNESPKKPIFMKDWK) are enriched in basic and acidic residues. Residues 1 to 30 (MDADDFGKKDLENGNESPKKPIFMKDWKNS) are disordered.

The protein resides in the cytoplasm. It localises to the nucleus. This is an uncharacterized protein from Schizosaccharomyces pombe (strain 972 / ATCC 24843) (Fission yeast).